The chain runs to 554 residues: Thermosome subunit alpha (554 aa).

A disordered region spans residues 530-554 (PKKKEKKGKTGEEEEEEGGGSKFEF).

The protein belongs to the TCP-1 chaperonin family. In terms of assembly, forms a Heterooligomeric complex of two stacked eight-membered rings.

In terms of biological role, molecular chaperone; binds unfolded polypeptides in vitro, and has a weak ATPase activity. In Aeropyrum pernix (strain ATCC 700893 / DSM 11879 / JCM 9820 / NBRC 100138 / K1), this protein is Thermosome subunit alpha (thsA).